We begin with the raw amino-acid sequence, 140 residues long: Large-conductance mechanosensitive channel (140 aa).

Transmembrane regions (helical) follow at residues Val16–Leu36 and Ile84–Ile104.

Belongs to the MscL family. As to quaternary structure, homopentamer.

The protein localises to the cell inner membrane. Channel that opens in response to stretch forces in the membrane lipid bilayer. May participate in the regulation of osmotic pressure changes within the cell. The sequence is that of Large-conductance mechanosensitive channel from Xanthomonas oryzae pv. oryzae (strain PXO99A).